We begin with the raw amino-acid sequence, 106 residues long: Large ribosomal subunit protein uL24 (106 aa).

This sequence belongs to the universal ribosomal protein uL24 family. In terms of assembly, part of the 50S ribosomal subunit.

Its function is as follows. One of two assembly initiator proteins, it binds directly to the 5'-end of the 23S rRNA, where it nucleates assembly of the 50S subunit. In terms of biological role, one of the proteins that surrounds the polypeptide exit tunnel on the outside of the subunit. The sequence is that of Large ribosomal subunit protein uL24 from Orientia tsutsugamushi (strain Boryong) (Rickettsia tsutsugamushi).